Reading from the N-terminus, the 468-residue chain is ATP synthase subunit beta (468 aa).

155–162 (GGAGVGKT) is a binding site for ATP.

The protein belongs to the ATPase alpha/beta chains family. In terms of assembly, F-type ATPases have 2 components, CF(1) - the catalytic core - and CF(0) - the membrane proton channel. CF(1) has five subunits: alpha(3), beta(3), gamma(1), delta(1), epsilon(1). CF(0) has three main subunits: a(1), b(2) and c(9-12). The alpha and beta chains form an alternating ring which encloses part of the gamma chain. CF(1) is attached to CF(0) by a central stalk formed by the gamma and epsilon chains, while a peripheral stalk is formed by the delta and b chains.

It localises to the cell membrane. It catalyses the reaction ATP + H2O + 4 H(+)(in) = ADP + phosphate + 5 H(+)(out). Produces ATP from ADP in the presence of a proton gradient across the membrane. The catalytic sites are hosted primarily by the beta subunits. The protein is ATP synthase subunit beta of Streptococcus pneumoniae serotype 19F (strain G54).